A 745-amino-acid polypeptide reads, in one-letter code: uncharacterized protein (745 aa).

The region spanning N158–D256 is the HTH araC/xylS-type domain. 2 consecutive DNA-binding regions (H-T-H motif) follow at residues S175–L196 and I223–T246.

This is an uncharacterized protein from Staphylococcus aureus (strain Mu50 / ATCC 700699).